The primary structure comprises 416 residues: Serine/threonine-protein kinase 26 (416 aa).

The residue at position 2 (alanine 2) is an N-acetylalanine. A Phosphoserine modification is found at serine 4. The Protein kinase domain maps to 24–274 (FTKLERIGKG…AKELLKHKFI (251 aa)). Residues 30-38 (IGKGSFGEV) and lysine 53 each bind ATP. Aspartate 144 functions as the Proton acceptor in the catalytic mechanism. Phosphothreonine; by autocatalysis is present on threonine 178. A disordered region spans residues 296-343 (AEGHSDEESDSEGSDSESSSRESNPHPEWSFTTVRKKPDPKKLQNGEE). Phosphoserine occurs at positions 300, 304, 306, 309, and 325. Phosphothreonine is present on residues threonine 327 and threonine 328. Positions 331–340 (KKPDPKKLQN) are enriched in basic and acidic residues.

This sequence belongs to the protein kinase superfamily. STE Ser/Thr protein kinase family. STE20 subfamily. As to quaternary structure, homodimer. Interacts with PDCD10. Interacts with GOLGA2. Interacts with CTTNBP2NL. Interacts with RIPOR1 (via C-terminus); this interaction occurs in a PDCD10-dependent and Rho-independent manner. Interacts with PDCD10; this interaction is required for the association of STK26 with RIPOR1. Part of the core of STRIPAK complexes composed of PP2A catalytic and scaffolding subunits, the striatins (PP2A regulatory subunits), the striatin-associated proteins MOB4, STRIP1 and STRIP2, PDCD10 and members of the STE20 kinases, such as STK24 and STK26. Mg(2+) serves as cofactor.

It is found in the cytoplasm. Its subcellular location is the golgi apparatus. It catalyses the reaction L-seryl-[protein] + ATP = O-phospho-L-seryl-[protein] + ADP + H(+). The catalysed reaction is L-threonyl-[protein] + ATP = O-phospho-L-threonyl-[protein] + ADP + H(+). Its activity is regulated as follows. Interaction with Golgi matrix protein GOLGA2 leads to autophosphorylation on Thr-178, possibly as a consequence of stabilization of dimer formation. May also be activated by C-terminal cleavage. Serine/threonine-protein kinase that acts as a mediator of cell growth. Modulates apoptosis. In association with STK24 negatively regulates Golgi reorientation in polarized cell migration upon RHO activation. Phosphorylates ATG4B at 'Ser-383', thereby increasing autophagic flux. Part of the striatin-interacting phosphatase and kinase (STRIPAK) complexes. STRIPAK complexes have critical roles in protein (de)phosphorylation and are regulators of multiple signaling pathways including Hippo, MAPK, nuclear receptor and cytoskeleton remodeling. Different types of STRIPAK complexes are involved in a variety of biological processes such as cell growth, differentiation, apoptosis, metabolism and immune regulation. The polypeptide is Serine/threonine-protein kinase 26 (Mus musculus (Mouse)).